Reading from the N-terminus, the 447-residue chain is Na(+)-translocating NADH-quinone reductase subunit A (447 aa).

It belongs to the NqrA family. As to quaternary structure, composed of six subunits; NqrA, NqrB, NqrC, NqrD, NqrE and NqrF.

The catalysed reaction is a ubiquinone + n Na(+)(in) + NADH + H(+) = a ubiquinol + n Na(+)(out) + NAD(+). NQR complex catalyzes the reduction of ubiquinone-1 to ubiquinol by two successive reactions, coupled with the transport of Na(+) ions from the cytoplasm to the periplasm. NqrA to NqrE are probably involved in the second step, the conversion of ubisemiquinone to ubiquinol. In Haemophilus influenzae (strain ATCC 51907 / DSM 11121 / KW20 / Rd), this protein is Na(+)-translocating NADH-quinone reductase subunit A.